Here is a 276-residue protein sequence, read N- to C-terminus: Type II pantothenate kinase (276 aa).

An ATP-binding site is contributed by 8 to 15 (DAGGTLTK). Glu76 functions as the Proton acceptor in the catalytic mechanism. ATP is bound by residues Thr105, 127–131 (GGTIM), Phe143, and Ser230.

The protein belongs to the type II pantothenate kinase family. In terms of assembly, homodimer.

The protein localises to the cytoplasm. The catalysed reaction is (R)-pantothenate + ATP = (R)-4'-phosphopantothenate + ADP + H(+). It participates in cofactor biosynthesis; coenzyme A biosynthesis; CoA from (R)-pantothenate: step 1/5. Catalyzes the phosphorylation of pantothenate (Pan), the first step in CoA biosynthesis. The polypeptide is Type II pantothenate kinase (Bacillus thuringiensis subsp. konkukian (strain 97-27)).